Here is a 241-residue protein sequence, read N- to C-terminus: Ribonuclease PH (241 aa).

Residues R86 and 124–126 (GTR) each bind phosphate.

The protein belongs to the RNase PH family. As to quaternary structure, homohexameric ring arranged as a trimer of dimers.

It catalyses the reaction tRNA(n+1) + phosphate = tRNA(n) + a ribonucleoside 5'-diphosphate. Its function is as follows. Phosphorolytic 3'-5' exoribonuclease that plays an important role in tRNA 3'-end maturation. Removes nucleotide residues following the 3'-CCA terminus of tRNAs; can also add nucleotides to the ends of RNA molecules by using nucleoside diphosphates as substrates, but this may not be physiologically important. Probably plays a role in initiation of 16S rRNA degradation (leading to ribosome degradation) during starvation. The protein is Ribonuclease PH of Hamiltonella defensa subsp. Acyrthosiphon pisum (strain 5AT).